Here is a 211-residue protein sequence, read N- to C-terminus: Probable nicotinate-nucleotide adenylyltransferase (211 aa).

It belongs to the NadD family.

It carries out the reaction nicotinate beta-D-ribonucleotide + ATP + H(+) = deamido-NAD(+) + diphosphate. Its pathway is cofactor biosynthesis; NAD(+) biosynthesis; deamido-NAD(+) from nicotinate D-ribonucleotide: step 1/1. In terms of biological role, catalyzes the reversible adenylation of nicotinate mononucleotide (NaMN) to nicotinic acid adenine dinucleotide (NaAD). The protein is Probable nicotinate-nucleotide adenylyltransferase of Cellvibrio japonicus (strain Ueda107) (Pseudomonas fluorescens subsp. cellulosa).